Reading from the N-terminus, the 63-residue chain is Protein CYSTEINE-RICH TRANSMEMBRANE MODULE 12 (63 aa).

The segment at 1-34 is disordered; that stretch reads MQDMRDQNPPQGYPAAEQVSEQPGQDKKKKKPRF. The chain crosses the membrane as a helical span at residues 40–56; that stretch reads KGDRGFIEGCLFALCCC.

This sequence belongs to the CYSTM1 family. Homodimer and heterodimers. Binds weakly to CYSTM4, CYSTM6 and CYSTM7. Mostly expressed in roots, flowers and siliques and, to a lower extent, in stems and leaves.

The protein resides in the cell membrane. The protein localises to the cytoplasm. Functionally, involved in resistance to abiotic stress. This Arabidopsis thaliana (Mouse-ear cress) protein is Protein CYSTEINE-RICH TRANSMEMBRANE MODULE 12.